Reading from the N-terminus, the 782-residue chain is MGSDWDEIKRLAADFQKAQLTSTLQKLSERNCVEIVTLLLEKQMLEVVFTNDGKEYITPDHLEREIQDELYVNGGRANLVEVSKTLNVDLSRIEVLAERIAAENPSVHLVLGQLIDEDYISHIAQEINEKLVQRGEISISELASQFDLPSDFLQHDVVEKHLGKIIKGRQDASNPRVFFTQAYIQRCKAKIRGALAAITRPINVAVILQQIGVQEKIFHSLLDEIAPAGQVTSKQANSQYVPHIYAKTQADWVNSFYKQNSFLEYDAIQKLGISDAKSYIRKQFPNEEFLFLKRVALGARLVELTVVTALNECSATKQYLDLTTILPSNLSEEDIEEVFSTIMAQKHSNPSNFVYLDGIVFSQPYLAQLVQPCQALAESQAKAAIDGGVYQQYIVEKTLAQKGNVSTQELEDDGKVDKRDERRKKASSGKAGGGAQGRETKTKSTKKHQRGKAAAQFDSDDEDDVQQGTRGGGGASKKAVKPLELVKTADIVKLITASLEEEGLEHLSKPIAALYTNQFNQTALARAQELFEATPQTNRRQTHAAIQDRINTLLIDIRLYEKGLKLFPQDTQTQLVKYLLKSLGNEICNELSLYVASECNLTVKNTNLNVDQRNKLAQECEAQYRAALLEQNKALNKSIDEFELATETVLKTCSMIIKKVDKKKDRLLIADHKRKLQKQLLECHEPALLLHLAALILFTTITGSILHASGKFVSAILQHIRGSLNEEQNALLLRYHDLVLQVLQATPDSNESKLANEHLQAMQTQVVELAQNFSRASVSKAD.

The tract at residues 405–478 (VSTQELEDDG…TRGGGGASKK (74 aa)) is disordered.

The protein belongs to the UFL1 family.

E3 UFM1-protein ligase that mediates ufmylation of target proteins. The protein is E3 UFM1-protein ligase 1 homolog of Drosophila simulans (Fruit fly).